Here is a 526-residue protein sequence, read N- to C-terminus: MVHWADYMAEKIIRERGDKEEYVVESGITPSGYVHIGNFREFFTAYIVGHALRDRGKRVRHIHMWDDYDRFRKVPKNVPPEWKEHLTKPVREVPDPWGCHESYADHFMSLFEEEISKLGIEADFLHASELYKSGEYAKEIRLALEKRDEIKAILDKYRERAKQPPLEDSWQPVMIYCPHCRKEAEFVSWDGEWKVSYKCPHCGAEGETDIREGNVKLRWRVDWPMRWAHFKVDFEPAGKDHLAAGSSYDTGKEIVEKVFGWKAPLTLMYEFVGIKGQKGKMSGSKGNVILLSDLYEVLEPGIIRFIYAKARPNKELRIDLGLGLLNLYDEFDRVERIYFGLEHAKNPEEEEELKRTYELSMPKLPERLVAQAPFRFLVTLVQMPHLDEDGIIRILQEQGHVPENLTDDDIERIKLRIRLAKNWVEKYAPDDVKFSLLERPPEIELRPEIREAMLEVAEWLEEHERFSVDELNNVIFDAAKKRGIPSKEWFKALYNIFIGKDRGPRLAPFLASLNREFVIKRLRLEG.

The 'HIGH' region motif lies at 30–38 (PSGYVHIGN). Residues Asp95, Cys99, His100, His106, Cys177, and Cys199 each contribute to the Zn(2+) site. The 'KMSKS' region signature appears at 280-284 (KMSGS).

It belongs to the class-I aminoacyl-tRNA synthetase family. Zn(2+) is required as a cofactor.

Its subcellular location is the cytoplasm. The enzyme catalyses tRNA(Lys) + L-lysine + ATP = L-lysyl-tRNA(Lys) + AMP + diphosphate. The protein is Lysine--tRNA ligase (lysS) of Thermococcus kodakarensis (strain ATCC BAA-918 / JCM 12380 / KOD1) (Pyrococcus kodakaraensis (strain KOD1)).